The chain runs to 505 residues: Flagellin (505 aa).

This sequence belongs to the bacterial flagellin family.

The protein localises to the secreted. The protein resides in the bacterial flagellum. In terms of biological role, flagellin is the subunit protein which polymerizes to form the filaments of bacterial flagella. The sequence is that of Flagellin (fliC) from Salmonella budapest.